The following is a 163-amino-acid chain: Cyanate hydratase (163 aa).

Residues R103, E106, and S129 contribute to the active site.

Belongs to the cyanase family.

It carries out the reaction cyanate + hydrogencarbonate + 3 H(+) = NH4(+) + 2 CO2. Functionally, catalyzes the reaction of cyanate with bicarbonate to produce ammonia and carbon dioxide. In Paracoccidioides lutzii (strain ATCC MYA-826 / Pb01) (Paracoccidioides brasiliensis), this protein is Cyanate hydratase.